The sequence spans 428 residues: Histidine--tRNA ligase (428 aa).

The protein belongs to the class-II aminoacyl-tRNA synthetase family. Homodimer.

The protein resides in the cytoplasm. The enzyme catalyses tRNA(His) + L-histidine + ATP = L-histidyl-tRNA(His) + AMP + diphosphate + H(+). The protein is Histidine--tRNA ligase of Ectopseudomonas mendocina (strain ymp) (Pseudomonas mendocina).